A 672-amino-acid polypeptide reads, in one-letter code: UvrABC system protein B (672 aa).

In terms of domain architecture, Helicase ATP-binding spans 26-183 (EGLEDGLAHQ…RRLSELQYVR (158 aa)). Position 39-46 (39-46 (GVTGSGKT)) interacts with ATP. Residues 92–115 (YYDYYQPEAYVPSSDTFIEKDASV) carry the Beta-hairpin motif. The 167-residue stretch at 431–597 (QVDDLLSEIN…ALNKKVTDIL (167 aa)) folds into the Helicase C-terminal domain. A disordered region spans residues 601–623 (DGPVRSRTKGARGQRAAEPHPDY). One can recognise a UVR domain in the interval 632–667 (EQQIQRLETQMYQHAQNLEFEQAAALRDEIHILREQ).

This sequence belongs to the UvrB family. In terms of assembly, forms a heterotetramer with UvrA during the search for lesions. Interacts with UvrC in an incision complex.

It localises to the cytoplasm. Functionally, the UvrABC repair system catalyzes the recognition and processing of DNA lesions. A damage recognition complex composed of 2 UvrA and 2 UvrB subunits scans DNA for abnormalities. Upon binding of the UvrA(2)B(2) complex to a putative damaged site, the DNA wraps around one UvrB monomer. DNA wrap is dependent on ATP binding by UvrB and probably causes local melting of the DNA helix, facilitating insertion of UvrB beta-hairpin between the DNA strands. Then UvrB probes one DNA strand for the presence of a lesion. If a lesion is found the UvrA subunits dissociate and the UvrB-DNA preincision complex is formed. This complex is subsequently bound by UvrC and the second UvrB is released. If no lesion is found, the DNA wraps around the other UvrB subunit that will check the other stand for damage. The sequence is that of UvrABC system protein B from Edwardsiella ictaluri (strain 93-146).